The following is an 803-amino-acid chain: Phenylalanine--tRNA ligase beta subunit (803 aa).

A tRNA-binding domain is found at 40–150 (SNKFYGIVIA…IDAPIGCNFY (111 aa)). The 76-residue stretch at 405–480 (PKIKIIKLHR…RIYGYNHIPK (76 aa)) folds into the B5 domain. Mg(2+) contacts are provided by aspartate 458 and glutamate 468. The FDX-ACB domain occupies 710–803 (SKFPKNYRDI…LKKHFNAIFR (94 aa)).

Belongs to the phenylalanyl-tRNA synthetase beta subunit family. Type 1 subfamily. Tetramer of two alpha and two beta subunits. The cofactor is Mg(2+).

Its subcellular location is the cytoplasm. It catalyses the reaction tRNA(Phe) + L-phenylalanine + ATP = L-phenylalanyl-tRNA(Phe) + AMP + diphosphate + H(+). The sequence is that of Phenylalanine--tRNA ligase beta subunit from Blochmanniella floridana.